A 250-amino-acid polypeptide reads, in one-letter code: Developmental protein SEPALLATA 2 (250 aa).

Residues 3 to 57 (RGRVELKRIENKINRQVTFAKRRNGLLKKAYELSVLCDAEVSLIVFSNRGKLYEF) enclose the MADS-box domain. Residues 85–150 (AKELENSYRE…CIKTQYMLDQ (66 aa)) adopt a coiled-coil conformation. The K-box domain occupies 88–178 (LENSYREYLK…SMKLEDMIGV (91 aa)).

In terms of assembly, heterodimer with AGAMOUS capable of binding to CArG-box sequences. Interacts with TT16/AGL32.

It is found in the nucleus. Functionally, probable transcription factor. Functions with SEPALLATA1/AGL2 and SEPALLATA3/AGL9 to ensure proper development of petals, stamens and carpels and to prevent the indeterminate growth of the flower meristem. Forms a heterodimer via the K-box domain with AG, that could be involved in genes regulation during floral meristem development. This chain is Developmental protein SEPALLATA 2 (SEP2), found in Arabidopsis thaliana (Mouse-ear cress).